A 293-amino-acid polypeptide reads, in one-letter code: Acetyl-coenzyme A carboxylase carboxyl transferase subunit beta (293 aa).

The 265-residue stretch at 29-293 (LWVKCSECSQ…GVKELAEANT (265 aa)) folds into the CoA carboxyltransferase N-terminal domain. Cysteine 33, cysteine 36, cysteine 52, and cysteine 55 together coordinate Zn(2+). Residues 33 to 55 (CSECSQVAYRKDLISNFNVCNNC) form a C4-type zinc finger.

The protein belongs to the AccD/PCCB family. In terms of assembly, acetyl-CoA carboxylase is a heterohexamer composed of biotin carboxyl carrier protein (AccB), biotin carboxylase (AccC) and two subunits each of ACCase subunit alpha (AccA) and ACCase subunit beta (AccD). Zn(2+) serves as cofactor.

The protein localises to the cytoplasm. The catalysed reaction is N(6)-carboxybiotinyl-L-lysyl-[protein] + acetyl-CoA = N(6)-biotinyl-L-lysyl-[protein] + malonyl-CoA. Its pathway is lipid metabolism; malonyl-CoA biosynthesis; malonyl-CoA from acetyl-CoA: step 1/1. Component of the acetyl coenzyme A carboxylase (ACC) complex. Biotin carboxylase (BC) catalyzes the carboxylation of biotin on its carrier protein (BCCP) and then the CO(2) group is transferred by the transcarboxylase to acetyl-CoA to form malonyl-CoA. The protein is Acetyl-coenzyme A carboxylase carboxyl transferase subunit beta of Prochlorococcus marinus (strain AS9601).